A 102-amino-acid chain; its full sequence is Small ribosomal subunit protein uS10 (102 aa).

The protein belongs to the universal ribosomal protein uS10 family. Part of the 30S ribosomal subunit.

In terms of biological role, involved in the binding of tRNA to the ribosomes. In Lacticaseibacillus casei (strain BL23) (Lactobacillus casei), this protein is Small ribosomal subunit protein uS10.